Consider the following 588-residue polypeptide: Proline--tRNA ligase (588 aa).

The protein belongs to the class-II aminoacyl-tRNA synthetase family. ProS type 1 subfamily. As to quaternary structure, homodimer.

It localises to the cytoplasm. The enzyme catalyses tRNA(Pro) + L-proline + ATP = L-prolyl-tRNA(Pro) + AMP + diphosphate. Catalyzes the attachment of proline to tRNA(Pro) in a two-step reaction: proline is first activated by ATP to form Pro-AMP and then transferred to the acceptor end of tRNA(Pro). As ProRS can inadvertently accommodate and process non-cognate amino acids such as alanine and cysteine, to avoid such errors it has two additional distinct editing activities against alanine. One activity is designated as 'pretransfer' editing and involves the tRNA(Pro)-independent hydrolysis of activated Ala-AMP. The other activity is designated 'posttransfer' editing and involves deacylation of mischarged Ala-tRNA(Pro). The misacylated Cys-tRNA(Pro) is not edited by ProRS. This chain is Proline--tRNA ligase, found in Corynebacterium glutamicum (strain ATCC 13032 / DSM 20300 / JCM 1318 / BCRC 11384 / CCUG 27702 / LMG 3730 / NBRC 12168 / NCIMB 10025 / NRRL B-2784 / 534).